The sequence spans 479 residues: Muscarinic acetylcholine receptor M4 (479 aa).

The Extracellular segment spans residues 1-31; the sequence is MANFTPVNGSSGNQSVRLVTSSSHNRYETVE. Asn8 and Asn13 each carry an N-linked (GlcNAc...) asparagine glycan. Residues 32–54 form a helical membrane-spanning segment; the sequence is MVFIATVTGSLSLVTVVGNILVM. Residues 55 to 68 lie on the Cytoplasmic side of the membrane; sequence LSIKVNRQLQTVNN. A helical membrane pass occupies residues 69–89; sequence YFLFSLACADLIIGAFSMNLY. Residues 90 to 106 are Extracellular-facing; that stretch reads TVYIIKGYWPLGAVVCD. Cys105 and Cys185 are oxidised to a cystine. The chain crosses the membrane as a helical span at residues 107–128; the sequence is LWLALDYVVSNASVMNLLIISF. At 129 to 148 the chain is on the cytoplasmic side; the sequence is DRYFCVTKPLTYPARRTTKM. The helical transmembrane segment at 149 to 171 threads the bilayer; that stretch reads AGLMIAAAWVLSFVLWAPAILFW. Residues 172–193 are Extracellular-facing; the sequence is QFVVGKRTVPDNQCFIQFLSNP. A helical membrane pass occupies residues 194 to 216; sequence AVTFGTAIAAFYLPVVIMTVLYI. Topologically, residues 217–401 are cytoplasmic; the sequence is HISLASRSRV…AARERKVTRT (185 aa). The tract at residues 271-333 is disordered; sequence KLEEAPPPAL…PAPPLQPRAL (63 aa). Residues 275–286 show a composition bias toward pro residues; it reads APPPALPPPPRP. Residues 294 to 304 are compositionally biased toward polar residues; the sequence is NESSSGSATQN. A helical transmembrane segment spans residues 402-422; it reads IFAILLAFILTWTPYNVMVLV. At 423 to 436 the chain is on the extracellular side; that stretch reads NTFCQSCIPDTVWS. A helical membrane pass occupies residues 437–456; sequence IGYWLCYVNSTINPACYALC. Residues 457-479 lie on the Cytoplasmic side of the membrane; sequence NATFKKTFRHLLLCQYRNIGTAR. Thr459, Thr463, and Thr477 each carry phosphothreonine.

This sequence belongs to the G-protein coupled receptor 1 family. Muscarinic acetylcholine receptor subfamily. CHRM4 sub-subfamily.

The protein localises to the cell membrane. The protein resides in the postsynaptic cell membrane. In terms of biological role, the muscarinic acetylcholine receptor mediates various cellular responses, including inhibition of adenylate cyclase, breakdown of phosphoinositides and modulation of potassium channels through the action of G proteins. Primary transducing effect is inhibition of adenylate cyclase. This chain is Muscarinic acetylcholine receptor M4 (CHRM4), found in Homo sapiens (Human).